Here is a 1286-residue protein sequence, read N- to C-terminus: CLIP-associating protein 2 (1286 aa).

Positions 1–40 (MRRLICKRICDYKSFDDEESVDGNRPSSAASAFKVPAPKT) are golgi localization. 2 positions are modified to phosphoserine: Ser14 and Ser20. Residues 17–70 (DEESVDGNRPSSAASAFKVPAPKTPGNPVNSARKPGSAGGPKAGGTSKEGGAGA) form a disordered region. The segment covering 53 to 69 (SAGGPKAGGTSKEGGAG) has biased composition (gly residues). Positions 66-317 (GGAGAVDEDD…KSLQTYLKSS (252 aa)) are TOG 1. HEAT repeat units follow at residues 179–214 (HGAEAIVPTLFNLVPNSAKVMATSGCAAIRFIIRHT), 215–251 (HVPRLIPLITSNCTSKSVPVRRRSFEFLDLLLQEWQT), and 256–293 (RHAAVLVETIKKGIHDADAEARVEARKTYMGLRNHFPG). Disordered regions lie at residues 320–350 (VASLPQSDRSSSSSQESLNRPFSSKWSTANP) and 355–374 (GRVSVGGSKASPLPGSLQRS). Residues Ser322, Ser333, and Ser336 each carry the phosphoserine modification. Over residues 322–340 (SLPQSDRSSSSSQESLNRP) the composition is skewed to low complexity. Over residues 341 to 350 (FSSKWSTANP) the composition is skewed to polar residues. Residues Ser374, Ser376, and Ser413 each carry the phosphoserine modification. The interval 410–473 (SYASLEDTSD…GSRSGSPGRV (64 aa)) is disordered. The span at 417–431 (TSDKMDGTASEDGRV) shows a compositional bias: basic and acidic residues. Residues 450–565 (RGRSRTKMVS…GPGYGMSQSS (116 aa)) form an interaction with microtubules, MAPRE1 and MAPRE3 region. Residues 459–473 (SQSQPGSRSGSPGRV) show a composition bias toward low complexity. Phosphoserine is present on residues Ser461, Ser465, Ser469, Ser484, and Ser495. A disordered region spans residues 492–566 (NSASAQKRSK…PGYGMSQSSR (75 aa)). The SXIP motif 1; mediates interaction with MAPRE1 and targeting to microtubule plus ends motif lies at 500–503 (SKIP). Ser513 is subject to Phosphoserine. The SXIP motif 2; mediates interaction with MAPRE1 and targeting to microtubule plus ends motif lies at 523-526 (SRIP). Phosphoserine occurs at positions 531, 535, 570, 572, 581, 614, and 620. Residues 606 to 616 (RYESYGMHSDD) show a composition bias toward basic and acidic residues. The disordered stretch occupies residues 606–638 (RYESYGMHSDDDANSDASSACSERSYSSRNGSI). The span at 620 to 634 (SDASSACSERSYSSR) shows a compositional bias: low complexity. The tract at residues 642–873 (MRQTEDVAEV…TKLLHNHLRN (232 aa)) is TOG 2. HEAT repeat units follow at residues 702–739 (KVFSMFLETLVDFIQVHKDDLQDWLFVLLTQLLKKMGA) and 764–801 (LQFNILMRFTVDQTQTPSLKVKVAILKYIETLAKQMDP). Thr779 is subject to Phosphothreonine. The segment at 864–1286 (TKLLHNHLRN…DPTTDVSGQS (423 aa)) is interaction with RSN and localization to the Golgi and kinetochores. Disordered regions lie at residues 870 to 920 (HLRN…FDYD) and 944 to 990 (SFRS…QPAL). Composition is skewed to polar residues over residues 872 to 884 (RNTGNGTQSSMGS) and 893 to 914 (SPANWSSPLTSPTNTSQNTLSP). At Ser884 the chain carries Phosphoserine. Phosphoserine occurs at positions 944, 947, 1005, and 1021. Basic and acidic residues predominate over residues 947–964 (SQEDMSEPLKRDPKKEDG). The required for cortical localization stretch occupies residues 1009-1286 (RDYNPYNYSD…DPTTDVSGQS (278 aa)). HEAT repeat units follow at residues 1046 to 1083 (LDHSDLVAELLKELSNHNERIEERKIALYELMKLTQEE), 1090 to 1127 (EHFKTILLLLLETLGDKEPTIRALALKVLKEILRHQPA), and 1208 to 1245 (LLLPEIMPGLIQGYDNSESSVRKACVFCLVAVHAVIGD).

It belongs to the CLASP family. Interacts with microtubules. Interacts with MAPRE1; probably required for targeting to the growing microtubule plus ends. Interacts with CLIP2, ERC1, MAPRE3, PHLDB2 and RSN. The interaction with ERC1 may be mediated by PHLDB2. Interacts with GCC2; recruits CLASP2 to Golgi membranes. Interacts with MACF1. Interacts with SOGA1 and MTCL1. Phosphorylated by GSK3B. Phosphorylation by GSK3B may negatively regulate binding to microtubule lattices in lamella.

It localises to the cytoplasm. The protein localises to the cytoskeleton. The protein resides in the microtubule organizing center. Its subcellular location is the centrosome. It is found in the chromosome. It localises to the centromere. The protein localises to the kinetochore. The protein resides in the spindle. Its subcellular location is the golgi apparatus. It is found in the trans-Golgi network. It localises to the cell membrane. The protein localises to the cell projection. The protein resides in the ruffle membrane. Its subcellular location is the cell cortex. In terms of biological role, microtubule plus-end tracking protein that promotes the stabilization of dynamic microtubules. Involved in the nucleation of noncentrosomal microtubules originating from the trans-Golgi network (TGN). Required for the polarization of the cytoplasmic microtubule arrays in migrating cells towards the leading edge of the cell. May act at the cell cortex to enhance the frequency of rescue of depolymerizing microtubules by attaching their plus-ends to cortical platforms composed of ERC1 and PHLDB2. This cortical microtubule stabilizing activity is regulated at least in part by phosphatidylinositol 3-kinase signaling. Also performs a similar stabilizing function at the kinetochore which is essential for the bipolar alignment of chromosomes on the mitotic spindle. Acts as a mediator of ERBB2-dependent stabilization of microtubules at the cell cortex. The sequence is that of CLIP-associating protein 2 (Clasp2) from Rattus norvegicus (Rat).